A 397-amino-acid polypeptide reads, in one-letter code: P2X purinoceptor 3 (397 aa).

The Cytoplasmic segment spans residues 1–20 (MNCISDFFTYETTKSVVVKS). The chain crosses the membrane as a helical span at residues 21 to 43 (WTIGIINRVVQLLIISYFVGWVF). Over 44 to 322 (LHEKAYQVRD…AGKFNIIPTI (279 aa)) the chain is Extracellular. Residues Lys63 and Lys65 each coordinate ATP. 3 disulfide bridges follow: Cys107-Cys153, Cys116-Cys137, and Cys122-Cys147. Glu111 provides a ligand contact to Mg(2+). Asn139 carries N-linked (GlcNAc...) asparagine glycosylation. A Mg(2+)-binding site is contributed by Asp158. Asp158 contacts Ca(2+). Residue Asn170 is glycosylated (N-linked (GlcNAc...) asparagine). Position 172 (Thr172) interacts with ATP. Residue Asn194 is glycosylated (N-linked (GlcNAc...) asparagine). Disulfide bonds link Cys203–Cys213 and Cys247–Cys256. Residues Ser275, Asn279, and Arg281 each contribute to the ATP site. Asn290 carries an N-linked (GlcNAc...) asparagine glycan. Position 299 (Lys299) interacts with ATP. Residues 323-341 (ISSVAAFTSVGVGTVLCDI) form a helical membrane-spanning segment. At 342–397 (ILLNFLKGADQYKAKKFEEVNETTLKIAALTNPVYPSDQTTAEKQSTDSGAFSIGH) the chain is on the cytoplasmic side. The span at 378 to 391 (SDQTTAEKQSTDSG) shows a compositional bias: polar residues. The segment at 378–397 (SDQTTAEKQSTDSGAFSIGH) is disordered.

Belongs to the P2X receptor family. As to quaternary structure, homotrimer. Forms heterotrimer with P2RX2. Heterotrimeric P2RX2/3 has a ligand dose-response profile that is distinct from either homotrimeric P2RX2 or P2RX3.

Its subcellular location is the cell membrane. It carries out the reaction Ca(2+)(in) = Ca(2+)(out). The catalysed reaction is Na(+)(in) = Na(+)(out). Has high sensitivity to ATP. Fast activation by external ATP. Exhibits rapid desensitization. Sensitives to the ATP agonist:alpha/beta-methylene-ATP. Subject to allosteric inhibition by AF-219. Mg(2+) and Ca(2+) slow deactivation of P2RX3. In terms of biological role, extracellular ATP-activated non-selective cation channel. Plays particularly important role in sensory neurons where its activation is critical for gustatory, nociceptive responses, visceral reflexes and sensory hypersensitization. This chain is P2X purinoceptor 3 (P2RX3), found in Homo sapiens (Human).